The following is a 231-amino-acid chain: MTFVDNFEFNQNTPRLVRGPFIILNSIIFSLSFILLCSTGIIIYYLNEYYLVKDLTIPLGSFILSAYMVITTIVGGIAIWKKKLGLHLTFMVFLVVLIVCLVGVSAKMIVDSGNPEKLQHKIENIWYKVGNYQHHSKHYHHGIIEIIEKHHRCCGWSKEIEGNYCVHFNRRESGHGYCAPYVEKSVESILKYLGYYGIVLSVIELILLILSGFFLLKTNKNVKSKSFILQD.

Over 1–21 the chain is Cytoplasmic; that stretch reads MTFVDNFEFNQNTPRLVRGPF. A helical membrane pass occupies residues 22–42; it reads IILNSIIFSLSFILLCSTGII. Over 43-58 the chain is Extracellular; that stretch reads IYYLNEYYLVKDLTIP. A helical transmembrane segment spans residues 59 to 79; it reads LGSFILSAYMVITTIVGGIAI. At 80 to 83 the chain is on the cytoplasmic side; sequence WKKK. A helical transmembrane segment spans residues 84–104; it reads LGLHLTFMVFLVVLIVCLVGV. Residues 105-195 are Extracellular-facing; it reads SAKMIVDSGN…VESILKYLGY (91 aa). The chain crosses the membrane as a helical span at residues 196 to 216; it reads YGIVLSVIELILLILSGFFLL. Over 217–231 the chain is Cytoplasmic; it reads KTNKNVKSKSFILQD.

This sequence belongs to the tetraspanin (TM4SF) family.

The protein resides in the membrane. This chain is Probable tetraspanin tspE (tspE), found in Dictyostelium discoideum (Social amoeba).